The sequence spans 594 residues: KIF-binding protein (594 aa).

The protein belongs to the KIF-binding protein family.

It localises to the cytoplasm. It is found in the cytoskeleton. Functionally, activator of KIF1B plus-end-directed microtubule motor activity. Required for organization of axonal microtubules, and axonal outgrowth and maintenance during peripheral and central nervous system development. The sequence is that of KIF-binding protein (Kifbp) from Gallus gallus (Chicken).